The primary structure comprises 412 residues: Aurora kinase (412 aa).

Residues 94–119 (NEKVRPSKSSHIPVKSPIRKKGHSPA) form a disordered region. Positions 148–401 (FEIGKVLGKG…LAEVMNHPWI (254 aa)) constitute a Protein kinase domain. ATP contacts are provided by residues 154–162 (LGKGKLGKV) and lysine 177. Aspartate 271 functions as the Proton acceptor in the catalytic mechanism.

It belongs to the protein kinase superfamily. Ser/Thr protein kinase family. Aurora subfamily.

It localises to the nucleus. The protein resides in the cytoplasm. It is found in the cytoskeleton. Its subcellular location is the spindle. The protein localises to the chromosome. It localises to the centromere. The protein resides in the kinetochore. It carries out the reaction L-seryl-[protein] + ATP = O-phospho-L-seryl-[protein] + ADP + H(+). It catalyses the reaction L-threonyl-[protein] + ATP = O-phospho-L-threonyl-[protein] + ADP + H(+). Functionally, component of the chromosomal passenger complex (CPC), a complex that acts as a key regulator of chromosome segregation and cytokinesis. Has a role in error-correction of aberrent kinetochore-microtubule attachments to ensure that sister kinetochores become bioriented and connect to opposite poles by promoting spindle assembly checkpoint signaling. The protein is Aurora kinase (IPL1) of Debaryomyces hansenii (strain ATCC 36239 / CBS 767 / BCRC 21394 / JCM 1990 / NBRC 0083 / IGC 2968) (Yeast).